Here is a 372-residue protein sequence, read N- to C-terminus: tRNA-specific 2-thiouridylase MnmA (372 aa).

Residues 13 to 20 and M39 each bind ATP; that span reads GMSGGVDS. The segment at 99–101 is interaction with target base in tRNA; that stretch reads NPD. Catalysis depends on C104, which acts as the Nucleophile. C104 and C200 are oxidised to a cystine. G128 contacts ATP. The tract at residues 150–152 is interaction with tRNA; sequence KDQ. The Cysteine persulfide intermediate role is filled by C200. The tract at residues 310–311 is interaction with tRNA; sequence RY.

It belongs to the MnmA/TRMU family.

The protein localises to the cytoplasm. It carries out the reaction S-sulfanyl-L-cysteinyl-[protein] + uridine(34) in tRNA + AH2 + ATP = 2-thiouridine(34) in tRNA + L-cysteinyl-[protein] + A + AMP + diphosphate + H(+). Its function is as follows. Catalyzes the 2-thiolation of uridine at the wobble position (U34) of tRNA, leading to the formation of s(2)U34. The chain is tRNA-specific 2-thiouridylase MnmA from Bacillus licheniformis (strain ATCC 14580 / DSM 13 / JCM 2505 / CCUG 7422 / NBRC 12200 / NCIMB 9375 / NCTC 10341 / NRRL NRS-1264 / Gibson 46).